A 313-amino-acid polypeptide reads, in one-letter code: Acetyl-coenzyme A carboxylase carboxyl transferase subunit beta, chloroplastic (313 aa).

A CoA carboxyltransferase N-terminal domain is found at 47 to 313; it reads LWTRCDNCEN…SAPCRRSNNS (267 aa). Cys-51, Cys-54, Cys-70, and Cys-73 together coordinate Zn(2+). Residues 51–73 form a C4-type zinc finger; the sequence is CDNCENMLYIRFLRQNKRICEEC.

This sequence belongs to the AccD/PCCB family. As to quaternary structure, acetyl-CoA carboxylase is a heterohexamer composed of biotin carboxyl carrier protein, biotin carboxylase and 2 subunits each of ACCase subunit alpha and ACCase plastid-coded subunit beta (accD). Zn(2+) is required as a cofactor.

It localises to the plastid. The protein resides in the chloroplast stroma. It catalyses the reaction N(6)-carboxybiotinyl-L-lysyl-[protein] + acetyl-CoA = N(6)-biotinyl-L-lysyl-[protein] + malonyl-CoA. Its pathway is lipid metabolism; malonyl-CoA biosynthesis; malonyl-CoA from acetyl-CoA: step 1/1. Its function is as follows. Component of the acetyl coenzyme A carboxylase (ACC) complex. Biotin carboxylase (BC) catalyzes the carboxylation of biotin on its carrier protein (BCCP) and then the CO(2) group is transferred by the transcarboxylase to acetyl-CoA to form malonyl-CoA. This Anthoceros angustus (Hornwort) protein is Acetyl-coenzyme A carboxylase carboxyl transferase subunit beta, chloroplastic.